Here is a 523-residue protein sequence, read N- to C-terminus: Cyclic di-GMP binding protein BcsE (523 aa).

It belongs to the BcsE family.

Required for cellulose biosynthesis. May have protease activity, but BcsA is not targeted. Binds bis-(3'-5') cyclic diguanylic acid (c-di-GMP). The protein is Cyclic di-GMP binding protein BcsE of Salmonella typhimurium (strain LT2 / SGSC1412 / ATCC 700720).